The chain runs to 114 residues: Cytochrome c oxidase assembly protein cox16, mitochondrial (114 aa).

Residues 29 to 49 traverse the membrane as a helical segment; it reads PFLLFGLPFMSVIVAGSFILT.

It belongs to the COX16 family.

Its subcellular location is the mitochondrion inner membrane. In terms of biological role, required for the assembly of the mitochondrial respiratory chain complex IV (CIV), also known as cytochrome c oxidase. May participate in merging the COX1 and COX2 assembly lines. The chain is Cytochrome c oxidase assembly protein cox16, mitochondrial (cox-9) from Neurospora crassa (strain ATCC 24698 / 74-OR23-1A / CBS 708.71 / DSM 1257 / FGSC 987).